The sequence spans 522 residues: Glucose-1-phosphate adenylyltransferase large subunit, chloroplastic/amyloplastic (522 aa).

The transit peptide at 1-62 directs the protein to the chloroplast; sequence MSSMQFSSVL…RGPAATGAQC (62 aa). Basic and acidic residues predominate over residues 28–42; it reads SERLKVGDSSSIRHE. Positions 28–54 are disordered; that stretch reads SERLKVGDSSSIRHERASRRMCNGGRG.

The protein belongs to the bacterial/plant glucose-1-phosphate adenylyltransferase family. Heterotetramer. In terms of tissue distribution, abundantly expressed in the whole grains, a slightly less abundant expression is seen in leaves, while a low level expression is seen in the roots. A greater expression is seen in the endosperm than in the embryo and pericarp layers.

The protein localises to the plastid. It is found in the chloroplast. The protein resides in the amyloplast. It catalyses the reaction alpha-D-glucose 1-phosphate + ATP + H(+) = ADP-alpha-D-glucose + diphosphate. It participates in glycan biosynthesis; starch biosynthesis. Insensitive to 3'phosphoglycerate and orthophosphate. This protein plays a role in synthesis of starch. It catalyzes the synthesis of the activated glycosyl donor, ADP-glucose from Glc-1-P and ATP. The polypeptide is Glucose-1-phosphate adenylyltransferase large subunit, chloroplastic/amyloplastic (AGP-L) (Triticum aestivum (Wheat)).